Here is a 312-residue protein sequence, read N- to C-terminus: MAKKTMGIHHITAIVGHPQENTDFYAGVLGLRLVKQTVNFDDPGTYHLYFGNEGGKPGTIITFFPWAGARQGVIGDGQVGVTSYVVPKGAMAFWEKRLEKFNVPYTKIERFGEQYVEFDDPHGLHLEIVEREEGEANTWTFGEVTPDVAIKGFGGATLLSEQPDKTADLLENIMGLERVGKEGDFVRYRSAGDIGNVIDLKLTPIGRGQMGAGTVHHIAWRANDDEDQLDWQRYIASHGYGVTPVRDRNYFNAIYFREHGEILFEIATDPPGFAHDETQETMGEKLMLPVQYEPHRTQIEQGLLPFEVRELD.

2 VOC domains span residues 7-131 (GIHH…IVER) and 152-269 (GFGG…IATD). Residues His10, His217, and Glu265 each coordinate Fe cation.

It belongs to the extradiol ring-cleavage dioxygenase family. Requires Fe(2+) as cofactor.

It localises to the cytoplasm. Functionally, putative ring-cleavage dioxygenase that may contribute to the degradation of aromatic compounds. In Bacillus subtilis (strain 168), this protein is Putative ring-cleaving dioxygenase MhqO (mhqO).